A 111-amino-acid polypeptide reads, in one-letter code: Toxin 3FTx-Tri2 (111 aa).

An N-terminal signal peptide occupies residues 1-19 (MKTLLLALVVLAFVCLGSA). The propeptide occupies 20–34 (DQVGLGKEQIDRGRR). Pyrrolidone carboxylic acid is present on Gln-35. Disulfide bonds link Cys-44-Cys-68, Cys-47-Cys-55, Cys-61-Cys-87, Cys-91-Cys-102, and Cys-103-Cys-108.

The protein belongs to the three-finger toxin family. Ancestral subfamily. Boigatoxin sub-subfamily. As to expression, expressed by the venom gland.

The protein resides in the secreted. Its function is as follows. Potent postsynaptic neurotoxin. Displays readily reversible competitive antagonism at the nicotinic acetylcholine receptor (nAChR). This chain is Toxin 3FTx-Tri2, found in Trimorphodon biscutatus (Western lyre snake).